The sequence spans 62 residues: UPF0434 protein Rpic_2808 (62 aa).

It belongs to the UPF0434 family.

The protein is UPF0434 protein Rpic_2808 of Ralstonia pickettii (strain 12J).